The following is a 582-amino-acid chain: Aspartate--tRNA ligase (582 aa).

Glutamate 174 lines the L-aspartate pocket. Positions 198–201 (QITK) are aspartate. Arginine 220 lines the L-aspartate pocket. ATP contacts are provided by residues 220 to 222 (RDE) and glutamine 229. Histidine 443 is a binding site for L-aspartate. Glutamate 477 contributes to the ATP binding site. An L-aspartate-binding site is contributed by arginine 484. 529–532 (GLDR) contacts ATP.

Belongs to the class-II aminoacyl-tRNA synthetase family. Type 1 subfamily. As to quaternary structure, homodimer.

The protein localises to the cytoplasm. It carries out the reaction tRNA(Asp) + L-aspartate + ATP = L-aspartyl-tRNA(Asp) + AMP + diphosphate. Catalyzes the attachment of L-aspartate to tRNA(Asp) in a two-step reaction: L-aspartate is first activated by ATP to form Asp-AMP and then transferred to the acceptor end of tRNA(Asp). The sequence is that of Aspartate--tRNA ligase from Streptococcus pyogenes serotype M5 (strain Manfredo).